We begin with the raw amino-acid sequence, 430 residues long: tRNA(Ile)-lysidine synthase (430 aa).

21-26 is an ATP binding site; that stretch reads SGGLDS.

Belongs to the tRNA(Ile)-lysidine synthase family.

The protein localises to the cytoplasm. It carries out the reaction cytidine(34) in tRNA(Ile2) + L-lysine + ATP = lysidine(34) in tRNA(Ile2) + AMP + diphosphate + H(+). In terms of biological role, ligates lysine onto the cytidine present at position 34 of the AUA codon-specific tRNA(Ile) that contains the anticodon CAU, in an ATP-dependent manner. Cytidine is converted to lysidine, thus changing the amino acid specificity of the tRNA from methionine to isoleucine. This chain is tRNA(Ile)-lysidine synthase, found in Salmonella choleraesuis (strain SC-B67).